Here is a 943-residue protein sequence, read N- to C-terminus: Leucine--tRNA ligase (943 aa).

A 'HIGH' region motif is present at residues 40–51 (PYPSGAGLHVGH). Positions 717 to 721 (KMSKS) match the 'KMSKS' region motif. Lys-720 is an ATP binding site.

This sequence belongs to the class-I aminoacyl-tRNA synthetase family.

It is found in the cytoplasm. It carries out the reaction tRNA(Leu) + L-leucine + ATP = L-leucyl-tRNA(Leu) + AMP + diphosphate. This is Leucine--tRNA ligase from Bacteroides fragilis (strain YCH46).